The following is a 299-amino-acid chain: NAD-dependent protein deacetylase 1 (299 aa).

The Deacetylase sirtuin-type domain maps to 15–292 (LPPGTTDLAP…TTVADRLGLR (278 aa)). Residues 39–59 (GAGI…GSLS) and 117–120 (QNVD) contribute to the NAD(+) site. H135 acts as the Proton acceptor in catalysis. Positions 143, 146, 194, and 197 each coordinate Zn(2+). NAD(+) contacts are provided by residues 234 to 236 (GSS) and L278.

The protein belongs to the sirtuin family. Class II subfamily. Zn(2+) is required as a cofactor.

It is found in the cytoplasm. It catalyses the reaction N(6)-acetyl-L-lysyl-[protein] + NAD(+) + H2O = 2''-O-acetyl-ADP-D-ribose + nicotinamide + L-lysyl-[protein]. In terms of biological role, NAD-dependent protein deacetylase which modulates the activities of several enzymes which are inactive in their acetylated form. The polypeptide is NAD-dependent protein deacetylase 1 (Streptomyces coelicolor (strain ATCC BAA-471 / A3(2) / M145)).